A 181-amino-acid polypeptide reads, in one-letter code: Ribonuclease M5 (181 aa).

In terms of domain architecture, Toprim spans 5 to 88; sequence KEIIVVEGKD…IKHAYLNTKD (84 aa). Positions 11, 57, and 59 each coordinate Mg(2+).

Belongs to the ribonuclease M5 family. Requires Mg(2+) as cofactor.

Its subcellular location is the cytoplasm. The catalysed reaction is Endonucleolytic cleavage of RNA, removing 21 and 42 nucleotides, respectively, from the 5'- and 3'-termini of a 5S-rRNA precursor.. Required for correct processing of both the 5' and 3' ends of 5S rRNA precursor. Cleaves both sides of a double-stranded region yielding mature 5S rRNA in one step. The chain is Ribonuclease M5 from Borreliella burgdorferi (strain ATCC 35210 / DSM 4680 / CIP 102532 / B31) (Borrelia burgdorferi).